A 219-amino-acid chain; its full sequence is Transmembrane emp24 domain-containing protein 10 (219 aa).

A signal peptide spans Met-1 to Gly-31. The tract at residues Met-1–Glu-142 is required for interaction with STX17. Over Ile-32 to Arg-185 the chain is Lumenal. Positions Arg-41–Ser-193 constitute a GOLD domain. The interval Leu-147–Thr-178 is required for TMED10 and TMED2 cis-Golgi network localization. Dimethylated arginine occurs at positions 171 and 176. N-linked (GlcNAc...) asparagine glycosylation occurs at Asn-179. A helical transmembrane segment spans residues Val-186–Phe-206. The interaction with COPG1 stretch occupies residues Gln-204–Glu-219. The Cytoplasmic segment spans residues Tyr-207 to Glu-219. Residues Tyr-207 to Glu-219 form an interaction with ARF1 and IL1B region. The COPII vesicle coat-binding motif lies at Phe-211–Phe-212. A COPI vesicle coat-binding motif is present at residues Phe-211 to Glu-219.

The protein belongs to the EMP24/GP25L family. In terms of assembly, predominantly dimeric and to a lesser extent monomeric in the ER. Monomer and dimer in ERGIC and cis-Golgi network. Forms homooligomer (via GOLD domain); the assembly is promoted by direct binding with leaderless cargos and may form a protein channel that facilitates cargo entry into the ERGIC. Forms heterooligomeric complexes with other members of the p24 family such as TMED2, TMED7 and TMED9. Interacts (via GOLD domain) with TMED2 (via GOLD domain); the complex is required for export of TMED10 from the ER to the cis-Golgi network; the complex is proposed to be involved in cis-Golgi network dynamics and / or biogenesis. Associates with the COPI vesicle coat subunits (coatomer). Tetramerization of the cytoplasmic domain at the Golgi membrane in vitro; the complex is proposed to interact with COPI coatomer and induce budding of the vesicles. Interacts with COPG1; the interaction involves TMED10 homodimer. Interacts with ARF1 (GDP-bound); the interaction probably involves a TMED10 oligomer. Interacts with SEC23A, SEC24B, SEC24C and SEC24D components of the coat protein complex II/COPII, indicative of an association of TMED10 with the COPII vesicle coat. Interacts with CD59. Interacts with MPPE1/PGAP5; the complex might recruit and sort GPI-anchored proteins to the ER-exit site, or the interaction might lead to recycling of PGAP5 between the ER and the Golgi. Interacts with F2LR1/PAR2. Interacts with KDELR2/ERD2; the interaction is disrupted by KDELR2 ligand. Found in a complex composed at least of SURF4, TMED2 and TMED10. Associates with the presenilin-dependent gamma-secretase complex. Interacts with STX17; the interaction is direct. Interacts with IL-1; the interaction is direct. Interacts with RAB21 (active GTP-bound form); the interaction is indirect and regulates TMED10 abundance and localization at the Golgi.

The protein resides in the endoplasmic reticulum membrane. Its subcellular location is the endoplasmic reticulum-Golgi intermediate compartment membrane. It localises to the golgi apparatus membrane. It is found in the golgi apparatus. The protein localises to the cis-Golgi network membrane. The protein resides in the trans-Golgi network membrane. Its subcellular location is the cytoplasmic vesicle. It localises to the secretory vesicle membrane. It is found in the cell membrane. The protein localises to the melanosome. In terms of biological role, cargo receptor involved in protein vesicular trafficking and quality control in the endoplasmic reticulum (ER) and Golgi. The p24 protein family is a group of transmembrane proteins that bind coat protein complex I/COPI and coat protein complex II/COPII involved in vesicular trafficking between the membranes. Acts at the lumenal side for incorporation of secretory cargo molecules into transport vesicles and involved in vesicle coat formation at the cytoplasmic side. Mainly functions in the early secretory pathway and cycles between the ER, ER-Golgi intermediate compartment (ERGIC) and Golgi, mediating cargo transport through COPI and COPII-coated vesicles. In COPII vesicle-mediated anterograde transport, involved in the transport of GPI-anchored proteins by acting together with TMED2 as their cargo receptor; the function specifically implies SEC24C and SEC24D of the COPII vesicle coat and lipid raft-like microdomains of the ER. Recognizes GPI anchors structural remodeled in the ER by the GPI inositol-deacylase/PGAP1 and the metallophosphoesterase MPPE1/PGAP5. In COPI vesicle-mediated retrograde transport, involved in the biogenesis of COPI vesicles and vesicle coat recruitment. Involved in trafficking of amyloid beta A4 protein and soluble APP-beta release (independent from the modulation of gamma-secretase activity). Involved in the KDELR2-mediated retrograde transport of the toxin A subunit (CTX-A-K63)together with COPI and the COOH terminus of KDELR2. On Golgi membranes, acts as a primary receptor for ARF1-GDP, a GTP-binding protein involved in COPI-vesicle formation. Increases coatomer-dependent GTPase-activating activity of ARFGAP2 which mediates the hydrolysis of ARF1-bound GTP and therefore modulates protein trafficking from the Golgi apparatus. Involved in the exocytic trafficking of G protein-coupled receptors F2LR1/PAR2 (trypsin and tryspin-like enzyme receptor), OPRM1 (opioid receptor) and P2RY4 (UTD and UDP receptor) from the Golgi to the plasma membrane, thus contributing to receptor resensitization. In addition to its cargo receptor activity, may also act as a protein channel after oligomerization, facilitating the post-translational entry of leaderless cytoplasmic cargo into the ERGIC. Involved in the translocation into ERGIC, the vesicle entry and the secretion of leaderless cargos (lacking the secretion signal sequence), including the mature form of interleukin 1/IL-1 family members, the alpha-crystallin B chain HSPB5, the carbohydrate-binding proteins galectin-1/LGALS1 and galectin-3/LGALS3, the microtubule-associated protein Tau/MAPT, and the annexin A1/ANXA1; the translocation process is dependent on cargo protein unfolding and enhanced by chaperones HSP90AB1 and HSP90B1/GRP9. Could also associates with the presenilin-dependent gamma-secretase complex in order to regulate gamma-cleavages of the amyloid beta A4 protein to yield amyloid-beta 40/Abeta40. This is Transmembrane emp24 domain-containing protein 10 from Mus musculus (Mouse).